Here is a 94-residue protein sequence, read N- to C-terminus: Pyrimidine/purine nucleoside phosphorylase (94 aa).

This sequence belongs to the nucleoside phosphorylase PpnP family.

It catalyses the reaction a purine D-ribonucleoside + phosphate = a purine nucleobase + alpha-D-ribose 1-phosphate. The catalysed reaction is adenosine + phosphate = alpha-D-ribose 1-phosphate + adenine. The enzyme catalyses cytidine + phosphate = cytosine + alpha-D-ribose 1-phosphate. It carries out the reaction guanosine + phosphate = alpha-D-ribose 1-phosphate + guanine. It catalyses the reaction inosine + phosphate = alpha-D-ribose 1-phosphate + hypoxanthine. The catalysed reaction is thymidine + phosphate = 2-deoxy-alpha-D-ribose 1-phosphate + thymine. The enzyme catalyses uridine + phosphate = alpha-D-ribose 1-phosphate + uracil. It carries out the reaction xanthosine + phosphate = alpha-D-ribose 1-phosphate + xanthine. Functionally, catalyzes the phosphorolysis of diverse nucleosides, yielding D-ribose 1-phosphate and the respective free bases. Can use uridine, adenosine, guanosine, cytidine, thymidine, inosine and xanthosine as substrates. Also catalyzes the reverse reactions. The polypeptide is Pyrimidine/purine nucleoside phosphorylase (Vibrio parahaemolyticus serotype O3:K6 (strain RIMD 2210633)).